Here is a 244-residue protein sequence, read N- to C-terminus: Capsid protein (244 aa).

The Bipartite nuclear localization signal motif lies at 1-24 (MSTSKRKRADEAQWNKRSTKKKGS). The disordered stretch occupies residues 1–39 (MSTSKRKRADEAQWNKRSTKKKGSAPQAKKPGGKVEKPS).

Belongs to the geminiviridae capsid protein family. Homomultimer. Interacts with the movement protein. Binds to single-stranded and double-stranded viral DNA.

The protein localises to the virion. It is found in the host nucleus. In terms of biological role, encapsidates the viral genome into characteristic twinned ('geminate') particles. Binds the genomic viral ssDNA and shuttles it into and out of the cell nucleus. Plays a role in protection of the genome from degradation, virus acquisition and transmission by insect vectors, infectivity, and systemic movement. The CP of monopartite geminiviruses is absolutely essential for virus movement. The polypeptide is Capsid protein (Avena sativa (Oat)).